A 600-amino-acid polypeptide reads, in one-letter code: Na(+)/dicarboxylate cotransporter 3 (600 aa).

The Cytoplasmic segment spans residues 1–16 (MAALAALAKKVWSARR). The helical transmembrane segment at 17–37 (LLVLLLVPLALLPILFALPPK) threads the bilayer. Residues 38–55 (EGRCLYVILLMAVYWCTE) lie on the Extracellular side of the membrane. The helical transmembrane segment at 56–76 (ALPLSVTALLPIILFPFMGIL) threads the bilayer. Residues 77-82 (PSSKVC) lie on the Cytoplasmic side of the membrane. The helical transmembrane segment at 83–103 (PQYFLDTNFLFLSGLIMASAI) threads the bilayer. The Extracellular portion of the chain corresponds to 104-137 (EERNLHRRIALKVLMLVGVQPARLILGMMVTTSF). Residues 138–158 (LSMWLSNTASTAMMLPIASAI) traverse the membrane as a helical segment. At 159-229 (LKSLFGQRDT…KEEEHRRNIW (71 aa)) the chain is on the cytoplasmic side. The chain crosses the membrane as a helical span at residues 230-250 (KGFLISIPYSASIGGTATLTG). Residues 251-278 (TAPNLILLGQLKSFFPQCDVVNFGSWFI) lie on the Extracellular side of the membrane. The helical transmembrane segment at 279–299 (FAFPLMLLFLLVGWLWISFLY) threads the bilayer. At 300–336 (GGMSWRGWRKKNSKLQDVAEDKAKAVIQEEFQNLGPI) the chain is on the cytoplasmic side. A helical membrane pass occupies residues 337 to 357 (KFAEQAVFILFCLFAILLFSR). At 358–372 (DPKFIPGWASLFAPG) the chain is on the extracellular side. Residues 373–393 (FVSDAVTGVAIVTILFFFPSQ) traverse the membrane as a helical segment. Residues 394-422 (KPSLKWWFDFKAPNSETEPLLSWKKAQET) are Cytoplasmic-facing. The segment at residues 423 to 443 (VPWNIILLLGGGFAMAKGCEE) is an intramembrane region (helical). Residues 444–461 (SGLSAWIGGQLHPLEHVP) are Cytoplasmic-facing. A helical membrane pass occupies residues 462–482 (PLLAVLLITVVIAFFTEFASN). At 483 to 505 (TATIIIFLPVLAELAIRLHVHPL) the chain is on the extracellular side. The helical transmembrane segment at 506–526 (YLMIPGTVSCSYAFMLPVSTP) threads the bilayer. Over 527–546 (PNSIAFSTGHLLVKDMVRTG) the chain is Cytoplasmic. The helical transmembrane segment at 547 to 567 (LLMNLMGVLLLSLAMNTWAQA) threads the bilayer. Over 568–600 (IFQLGTFPDWANTHAANVTALPPALTNNTVQTL) the chain is Extracellular. Residues N584 and N594 are each glycosylated (N-linked (GlcNAc...) asparagine).

Belongs to the SLC13A/DASS transporter (TC 2.A.47) family. NADC subfamily. As to expression, highly expressed in proximal parts of straight tubules in the kidney. Detected in placenta, in brain, and in liver. Strongly expressed within the meningeal layers of supporting tissue that surround the brain and relatively weakly expressed throughout the cerebral cortex, hippocampus, and cerebellum.

The protein resides in the cell membrane. The catalysed reaction is succinate(out) + 3 Na(+)(out) = succinate(in) + 3 Na(+)(in). It carries out the reaction 2-oxoglutarate(out) + 3 Na(+)(out) = 2-oxoglutarate(in) + 3 Na(+)(in). The enzyme catalyses N-acetyl-L-aspartate(out) + 3 Na(+)(out) = N-acetyl-L-aspartate(in) + 3 Na(+)(in). It catalyses the reaction glutarate(out) + 3 Na(+)(out) = glutarate(in) + 3 Na(+)(in). The catalysed reaction is fumarate(out) + 3 Na(+)(out) = fumarate(in) + 3 Na(+)(in). It carries out the reaction malate(out) + 3 Na(+)(out) = malate(in) + 3 Na(+)(in). The enzyme catalyses 2,2-dimethylsuccinate(out) + 3 Na(+)(out) = 2,2-dimethylsuccinate(in) + 3 Na(+)(in). It catalyses the reaction 2,3-dimethylsuccinate(out) + 3 Na(+)(out) = 2,3-dimethylsuccinate(in) + 3 Na(+)(in). The catalysed reaction is itaconate(out) + 3 Na(+)(out) = itaconate(in) + 3 Na(+)(in). With respect to regulation, li(+) decreases succinate transport in the presence of Na(+). Functionally, high-affinity sodium-dicarboxylate cotransporter that accepts a range of substrates with 4-6 carbon atoms, such as the citric acid cycle intermediates succinate and alpha-ketoglutarate (2-oxoglutarate), as well as other compounds including N-acetyl-L-aspartate. Transports the dicarboxylate into the cell with a probable stoichiometry of 3 Na(+) for 1 divalent dicarboxylate, rendering the process electrogenic. Can transport citrate in a Na(+)-dependent manner, recognizing the divalent form of citrate rather than the trivalent form which is normally found in blood. Imports itaconate in hepatocytes leading to activation of TFEB-dependent lysosomal biogenesis involved in antibacterial innate immune response. This Rattus norvegicus (Rat) protein is Na(+)/dicarboxylate cotransporter 3 (Slc13a3).